The sequence spans 564 residues: Formate--tetrahydrofolate ligase (564 aa).

Residue 65 to 72 coordinates ATP; the sequence is TPLGEGKT.

This sequence belongs to the formate--tetrahydrofolate ligase family.

It catalyses the reaction (6S)-5,6,7,8-tetrahydrofolate + formate + ATP = (6R)-10-formyltetrahydrofolate + ADP + phosphate. It participates in one-carbon metabolism; tetrahydrofolate interconversion. The polypeptide is Formate--tetrahydrofolate ligase (Roseiflexus sp. (strain RS-1)).